The primary structure comprises 957 residues: Glycine dehydrogenase (decarboxylating) 2 (957 aa).

Position 707 is an N6-(pyridoxal phosphate)lysine (Lys707).

It belongs to the GcvP family. As to quaternary structure, the glycine cleavage system is composed of four proteins: P, T, L and H. The cofactor is pyridoxal 5'-phosphate.

It catalyses the reaction N(6)-[(R)-lipoyl]-L-lysyl-[glycine-cleavage complex H protein] + glycine + H(+) = N(6)-[(R)-S(8)-aminomethyldihydrolipoyl]-L-lysyl-[glycine-cleavage complex H protein] + CO2. The glycine cleavage system catalyzes the degradation of glycine. The P protein binds the alpha-amino group of glycine through its pyridoxal phosphate cofactor; CO(2) is released and the remaining methylamine moiety is then transferred to the lipoamide cofactor of the H protein. This chain is Glycine dehydrogenase (decarboxylating) 2 (gcvP2), found in Pseudomonas putida (strain ATCC 47054 / DSM 6125 / CFBP 8728 / NCIMB 11950 / KT2440).